The following is a 312-amino-acid chain: MFKHETVLLHETVDMLEVKPDGIYVDATLGGAGHSEYLLNKLNEKGHLFAFDQDQTAIDNAKIKLADYSDKVTFIKANFRDMKEALNERGIEAVDGILYDLGVSSPQLDERERGFSYHQDAALDMRMDQEQELTAKIVVNEWSYQDLIRIFFQYGEEKFSKQIAREIERRREVKPIETTGELVDIIKTAIPAPARRKGGHPGKRTFQAIRIAVNDELGAVEDSLEKALTLLKPGGRISVITFHSLEDRITKQLFQEATKGPDLPPGLPVIPDEYKPDFKLATRKPIVPSEEELEQNNRARSAKLRVIEKIIK.

S-adenosyl-L-methionine-binding positions include 32–34 (AGH), aspartate 52, phenylalanine 79, aspartate 100, and glutamine 107.

It belongs to the methyltransferase superfamily. RsmH family.

The protein localises to the cytoplasm. The enzyme catalyses cytidine(1402) in 16S rRNA + S-adenosyl-L-methionine = N(4)-methylcytidine(1402) in 16S rRNA + S-adenosyl-L-homocysteine + H(+). Its function is as follows. Specifically methylates the N4 position of cytidine in position 1402 (C1402) of 16S rRNA. The polypeptide is Ribosomal RNA small subunit methyltransferase H (Listeria monocytogenes serotype 4b (strain F2365)).